A 327-amino-acid polypeptide reads, in one-letter code: MATCPSIFDALVIGAGPAGLSAALALGRVMRTAAIFDTGVFRNAPANHMHTVPTWDHQSPVAYRQQCITELRQRYNGTIHFANTGVASVKAGKDSDYVVTDEAGKTWMGRKVILATGVKDVMPDVKGYAQAWGRYIFHCLFCHGFEQRGSESAGLLVLDKTILSTEIEIAVHFGHLALQFAKKITVFLDGHVEFLEDPRIKGLEAQGFLINPKPISKITYAADPEPGFATVHLEDGSEENMSFLVHRPRTLLAGDFANQLGLELTEAGDVKTTPPFYETSVKGVFAAGDCAVPLKQVVWAVSTGVSAGSGVNFQCLGADMAARSKLS.

Residues 15 to 18 (AGPA), 37 to 42 (DTGVFR), His-50, and Ala-115 contribute to the FAD site. A disulfide bridge links Cys-139 with Cys-142. FAD-binding positions include Asp-289 and 296–297 (QV).

It belongs to the class-II pyridine nucleotide-disulfide oxidoreductase family. Homodimer. It depends on FAD as a cofactor.

It functions in the pathway mycotoxin biosynthesis. Its function is as follows. Thioredoxin reductase; part of the gene cluster that mediates the biosynthesis of sirodesmin PL, an epipolythiodioxopiperazine (ETP) characterized by a disulfide bridged cyclic dipeptide and that acts as a phytotoxin which is involved in the blackleg didease of canola. SirD catalyzes the O-prenylation of L-tyrosine (L-Tyr) in the presence of dimethylallyl diphosphate (DMAPP) to yield 4-O-dimethylallyl-L-Tyr, and therefore represents probably the first pathway-specific enzyme in the biosynthesis of sirodesmin PL. 4-O-dimethylallyl-L-Tyr, then undergoes condensation with L-Ser in a reaction catalyzed by the non-ribosomal peptide synthase sirP to form the diketopiperazine (DKP) backbone. Further bishydroxylation of the DKP performed by the cytochrome P450 monooxygenase sirC leads to the production of the intermediate phomamide. This step is essential to form the reactive thiol group required for toxicity of sirodesmin PL. The next steps of sirodesmin biosynthesis are not well understood yet, but some predictions could be made from intermediate compounds identification. Phomamide is converted into phomalizarine via oxidation, probably by sirT. Further oxidation, methylation (by sirM or sirN) and reduction steps convert phomalizarine to deacetyl sirodesmin. Finally, acetyltransferase sirH probably acetylates deacetyl sirodesmin to produce sirodesmin PL. The sequence is that of Thioredoxin reductase sirT from Leptosphaeria maculans (Blackleg fungus).